The sequence spans 427 residues: Glutamate-1-semialdehyde 2,1-aminomutase (427 aa).

The residue at position 265 (Lys265) is an N6-(pyridoxal phosphate)lysine.

The protein belongs to the class-III pyridoxal-phosphate-dependent aminotransferase family. HemL subfamily. Homodimer. The cofactor is pyridoxal 5'-phosphate.

It is found in the cytoplasm. It catalyses the reaction (S)-4-amino-5-oxopentanoate = 5-aminolevulinate. It functions in the pathway porphyrin-containing compound metabolism; protoporphyrin-IX biosynthesis; 5-aminolevulinate from L-glutamyl-tRNA(Glu): step 2/2. This Pseudomonas putida (strain GB-1) protein is Glutamate-1-semialdehyde 2,1-aminomutase.